A 344-amino-acid chain; its full sequence is Phosphoribosylformylglycinamidine cyclo-ligase (344 aa).

It belongs to the AIR synthase family.

It is found in the cytoplasm. It catalyses the reaction 2-formamido-N(1)-(5-O-phospho-beta-D-ribosyl)acetamidine + ATP = 5-amino-1-(5-phospho-beta-D-ribosyl)imidazole + ADP + phosphate + H(+). It functions in the pathway purine metabolism; IMP biosynthesis via de novo pathway; 5-amino-1-(5-phospho-D-ribosyl)imidazole from N(2)-formyl-N(1)-(5-phospho-D-ribosyl)glycinamide: step 2/2. The protein is Phosphoribosylformylglycinamidine cyclo-ligase of Neisseria meningitidis serogroup B (strain ATCC BAA-335 / MC58).